The chain runs to 154 residues: Transcriptional repressor NrdR (154 aa).

A zinc finger lies at C3–C34. Positions L46–D136 constitute an ATP-cone domain.

The protein belongs to the NrdR family. Zn(2+) serves as cofactor.

In terms of biological role, negatively regulates transcription of bacterial ribonucleotide reductase nrd genes and operons by binding to NrdR-boxes. The sequence is that of Transcriptional repressor NrdR from Mycobacteroides abscessus (strain ATCC 19977 / DSM 44196 / CCUG 20993 / CIP 104536 / JCM 13569 / NCTC 13031 / TMC 1543 / L948) (Mycobacterium abscessus).